We begin with the raw amino-acid sequence, 304 residues long: GTPase Era (304 aa).

An Era-type G domain is found at Lys9–Glu176. The segment at Gly17–Ser24 is G1. Gly17–Ser24 provides a ligand contact to GTP. The interval Gln43 to Asn47 is G2. The tract at residues Asp64–Gly67 is G3. GTP is bound by residues Asp64–Ile68 and Asn126–Asp129. Residues Asn126 to Asp129 are G4. Positions Val155–Ala157 are G5. Residues Ile199–Lys285 form the KH type-2 domain.

The protein belongs to the TRAFAC class TrmE-Era-EngA-EngB-Septin-like GTPase superfamily. Era GTPase family. As to quaternary structure, monomer.

It localises to the cytoplasm. The protein resides in the cell membrane. Its function is as follows. An essential GTPase that binds both GDP and GTP, with rapid nucleotide exchange. Plays a role in 16S rRNA processing and 30S ribosomal subunit biogenesis and possibly also in cell cycle regulation and energy metabolism. The polypeptide is GTPase Era (Halalkalibacterium halodurans (strain ATCC BAA-125 / DSM 18197 / FERM 7344 / JCM 9153 / C-125) (Bacillus halodurans)).